Consider the following 428-residue polypeptide: Adenylosuccinate synthetase (428 aa).

GTP contacts are provided by residues 12-18 (GDEGKGK) and 40-42 (GHT). The active-site Proton acceptor is the Asp-13. Asp-13 and Gly-40 together coordinate Mg(2+). Residues 13-16 (DEGK), 38-41 (NAGH), Thr-128, Arg-142, Gln-223, Thr-238, and Arg-302 each bind IMP. His-41 serves as the catalytic Proton donor. Residue 298 to 304 (TTTGRPR) coordinates substrate. Residues Arg-304, 330 to 332 (KLD), and 412 to 414 (GVG) contribute to the GTP site.

It belongs to the adenylosuccinate synthetase family. In terms of assembly, homodimer. Requires Mg(2+) as cofactor.

Its subcellular location is the cytoplasm. It catalyses the reaction IMP + L-aspartate + GTP = N(6)-(1,2-dicarboxyethyl)-AMP + GDP + phosphate + 2 H(+). It functions in the pathway purine metabolism; AMP biosynthesis via de novo pathway; AMP from IMP: step 1/2. In terms of biological role, plays an important role in the de novo pathway of purine nucleotide biosynthesis. Catalyzes the first committed step in the biosynthesis of AMP from IMP. This chain is Adenylosuccinate synthetase, found in Kineococcus radiotolerans (strain ATCC BAA-149 / DSM 14245 / SRS30216).